The sequence spans 580 residues: MALQLLTPSFSFQHSPSPHKLTTLRYTHHRIRCTASAPSYSDLVRRRSANYKPSKWDSNFVETLESDYKKENHEMYIEKLMGDVKHLMKEVVNPIEKMELVDTIQRLGLGYLFNKEIKEVLNTITTSKATLKTKKDLHAVALQFRLLRQHGYEVSPDAFHEFKDEKGGFKESLCMDIKGMLCLYEASHLSFQGEVVLDEAREFTSTHLKAIGGNIDPVLLKKVRHSLEMPLHWRMLRLEARWYIETYDEEDRKNPSLAELAKHDFNSVQTIYQRSLKRMSRWWRDLGLGERLEFSRDRLVECFFWTTGVIFDPQFERCRGVLTKVNQLVSTIDDVYDVYGSLEELELFTDAVDRWDIRAMEQLPEYMKICYLALYNTTNDIAYEALKEEGLDVIPYLKKVWTDLCKSYIVEARWYSNGYKPTLEEYLENAWTSIAGPVALVHAYFSFGQKMPFEALNYSNTSSLIKWSSMIFRLCDDLATSSDEVARGDVPKSIQCYMYEAGVSESVARDHIKYLIDEAWKKMNECLVYNTPFLQPLINAGLNLARMAHCMYERGDGHGFSNELDKKRVLLLLAEPFKFM.

Residues 1-32 (MALQLLTPSFSFQHSPSPHKLTTLRYTHHRIR) constitute a chloroplast transit peptide. Residues arginine 296, aspartate 333, aspartate 337, arginine 473, and aspartate 476 each coordinate (2E)-geranyl diphosphate. Mg(2+) is bound by residues aspartate 333 and aspartate 337. The short motif at 333–337 (DDVYD) is the DDXXD motif element. Residues aspartate 476, threonine 480, and glutamate 484 each coordinate Mg(2+).

The protein belongs to the terpene synthase family. Tpsb subfamily. As to quaternary structure, monomer. Mg(2+) is required as a cofactor. The cofactor is Mn(2+). In terms of tissue distribution, expressed in developing and mature fruits. Barely detectable in leaves and shoots.

The protein localises to the plastid. Its subcellular location is the chloroplast. It carries out the reaction (2E)-geranyl diphosphate = alpha-thujene + diphosphate. The protein operates within secondary metabolite biosynthesis; terpenoid biosynthesis. In terms of biological role, monoterpene synthase (TPS) involved in the biosynthesis of monoterpene natural products used by traditional Chinese medicine to treat headache, inflammation and intoxication. Catalyzes the conversion of (2E)-geranyl diphosphate (GPP) into alpha-thujene. This Litsea cubeba (Aromatic litsea) protein is Alpha-thujene synthase, chloroplastic.